The sequence spans 98 residues: MKFSKLSLTLALILTQVLFVLCGKINEDFMKHGLESQALHDEIRKPIDSENPDTERLLDCLLDNRVCSSDKDCCGMTPSCTMGLCVPSVGGLVGGILG.

The first 22 residues, 1–22 (MKFSKLSLTLALILTQVLFVLC), serve as a signal peptide directing secretion. The propeptide occupies 24–56 (KINEDFMKHGLESQALHDEIRKPIDSENPDTER). Cystine bridges form between C60–C74, C67–C80, and C73–C85. The residue at position 97 (L97) is a Leucine amide.

This sequence belongs to the neurotoxin 15 family. 02 (omega-actx) subfamily. In terms of tissue distribution, expressed by the venom gland.

The protein resides in the secreted. Its function is as follows. Potent inhibitor of insect, but not mammalian, voltage-gated calcium channels (Cav). In Atrax robustus (Sydney funnel-web spider), this protein is Omega-hexatoxin-Hr2b.